The primary structure comprises 51 residues: Large ribosomal subunit protein eL39 (51 aa).

Residues 32–51 (KRRVTRSPARRHWRRQKLKA) are disordered.

This sequence belongs to the eukaryotic ribosomal protein eL39 family.

In Pyrobaculum calidifontis (strain DSM 21063 / JCM 11548 / VA1), this protein is Large ribosomal subunit protein eL39.